The chain runs to 269 residues: 4-hydroxy-tetrahydrodipicolinate reductase (269 aa).

NAD(+) contacts are provided by residues 8–13, Glu34, 98–100, and 122–125; these read GASGRM, GTT, and APNM. His155 functions as the Proton donor/acceptor in the catalytic mechanism. (S)-2,3,4,5-tetrahydrodipicolinate is bound at residue His156. Lys159 acts as the Proton donor in catalysis. 165–166 provides a ligand contact to (S)-2,3,4,5-tetrahydrodipicolinate; sequence GT.

Belongs to the DapB family.

The protein localises to the cytoplasm. The catalysed reaction is (S)-2,3,4,5-tetrahydrodipicolinate + NAD(+) + H2O = (2S,4S)-4-hydroxy-2,3,4,5-tetrahydrodipicolinate + NADH + H(+). The enzyme catalyses (S)-2,3,4,5-tetrahydrodipicolinate + NADP(+) + H2O = (2S,4S)-4-hydroxy-2,3,4,5-tetrahydrodipicolinate + NADPH + H(+). It participates in amino-acid biosynthesis; L-lysine biosynthesis via DAP pathway; (S)-tetrahydrodipicolinate from L-aspartate: step 4/4. Functionally, catalyzes the conversion of 4-hydroxy-tetrahydrodipicolinate (HTPA) to tetrahydrodipicolinate. The chain is 4-hydroxy-tetrahydrodipicolinate reductase from Desulfotalea psychrophila (strain LSv54 / DSM 12343).